Reading from the N-terminus, the 328-residue chain is UDP-glucose 4-epimerase (328 aa).

Thr119 contributes to the substrate binding site. Tyr143 functions as the Proton acceptor in the catalytic mechanism.

The protein belongs to the NAD(P)-dependent epimerase/dehydratase family. It depends on NAD(+) as a cofactor.

The catalysed reaction is UDP-alpha-D-glucose = UDP-alpha-D-galactose. It functions in the pathway carbohydrate metabolism; galactose metabolism. The protein operates within glycan metabolism; exopolysaccharide biosynthesis. The chain is UDP-glucose 4-epimerase (exoB) from Rhizobium meliloti (strain 1021) (Ensifer meliloti).